The chain runs to 735 residues: Disintegrin and metalloproteinase domain-containing protein 2 (735 aa).

A signal peptide spans 1 to 16; the sequence is MWRVLFLLSGLGGLWM. Residues 17-174 constitute a propeptide that is removed on maturation; that stretch reads DSNFDSLPVQ…FKLQSIEPQK (158 aa). Over 17–686 the chain is Extracellular; it reads DSNFDSLPVQ…ENVYHSKPMR (670 aa). N-linked (GlcNAc...) asparagine glycosylation is found at Asn-76, Asn-122, and Asn-220. Positions 178–375 constitute a Peptidase M12B domain; the sequence is KYIEMHVVVE…QKSQCLHNQP (198 aa). Cystine bridges form between Cys-287-Cys-370, Cys-329-Cys-354, Cys-331-Cys-336, and Cys-445-Cys-465. 3 N-linked (GlcNAc...) asparagine glycosylation sites follow: Asn-353, Asn-459, and Asn-566. One can recognise a Disintegrin domain in the interval 384-473; the sequence is QAVCGNAKLE…SCPENHFIQT (90 aa). One can recognise an EGF-like domain in the interval 612 to 645; it reads LGYDCTTDKCNHRGVCNNKKHCHCSASYLPPDCS. Disulfide bonds link Cys-616–Cys-627, Cys-621–Cys-633, and Cys-635–Cys-644. A helical membrane pass occupies residues 687 to 707; it reads WPLFLFIPFFIIFCVLIAIMV. Over 708 to 735 the chain is Cytoplasmic; the sequence is KVHFQRKKWRTEDYSTDEQPESESEPKG. At Ser-729 the chain carries Phosphoserine.

In terms of assembly, heterodimer with ADAM1/fertilin subunit alpha. In terms of processing, the signal and the metalloprotease domain are cleaved during the epididymal maturation of the spermatozoa. Expressed specifically in testis.

It is found in the membrane. In terms of biological role, sperm surface membrane protein that may be involved in sperm-egg plasma membrane adhesion and fusion during fertilization. Could have a direct role in sperm-zona binding or migration of sperm from the uterus into the oviduct. Interactions with egg membrane could be mediated via binding between its disintegrin-like domain to one or more integrins receptors on the egg. This is a non catalytic metalloprotease-like protein. The sequence is that of Disintegrin and metalloproteinase domain-containing protein 2 (ADAM2) from Macaca fascicularis (Crab-eating macaque).